A 325-amino-acid polypeptide reads, in one-letter code: Alkanal monooxygenase beta chain (325 aa).

Belongs to the bacterial luciferase oxidoreductase family. As to quaternary structure, heterodimer of an alpha and a beta chain.

The catalysed reaction is a long-chain fatty aldehyde + FMNH2 + O2 = a long-chain fatty acid + hnu + FMN + H2O + 2 H(+). Its function is as follows. Light-emitting reaction in luminous bacteria. The specific role of the beta subunit is unknown, but it is absolutely required for bioluminescence activity. In Photobacterium leiognathi, this protein is Alkanal monooxygenase beta chain (luxB).